The primary structure comprises 307 residues: UDP-N-acetylenolpyruvoylglucosamine reductase (307 aa).

An FAD-binding PCMH-type domain is found at 33 to 198; that stretch reads KVGGPVDILV…LEAILKLSLG (166 aa). R177 is a catalytic residue. The Proton donor role is filled by S227. The active site involves E297.

It belongs to the MurB family. It depends on FAD as a cofactor.

The protein localises to the cytoplasm. It catalyses the reaction UDP-N-acetyl-alpha-D-muramate + NADP(+) = UDP-N-acetyl-3-O-(1-carboxyvinyl)-alpha-D-glucosamine + NADPH + H(+). It functions in the pathway cell wall biogenesis; peptidoglycan biosynthesis. Its function is as follows. Cell wall formation. This chain is UDP-N-acetylenolpyruvoylglucosamine reductase, found in Clostridium tetani (strain Massachusetts / E88).